Reading from the N-terminus, the 321-residue chain is Malate dehydrogenase (321 aa).

Residues 10 to 15 (GSGMIG) and Asp34 each bind NAD(+). Substrate contacts are provided by Arg83 and Arg89. NAD(+) is bound by residues Asn96 and 119 to 121 (ITN). The substrate site is built by Asn121 and Arg152. Catalysis depends on His176, which acts as the Proton acceptor.

The protein belongs to the LDH/MDH superfamily. MDH type 3 family.

The enzyme catalyses (S)-malate + NAD(+) = oxaloacetate + NADH + H(+). In terms of biological role, catalyzes the reversible oxidation of malate to oxaloacetate. The protein is Malate dehydrogenase of Chelativorans sp. (strain BNC1).